The chain runs to 208 residues: Small ribosomal subunit protein uS3 (208 aa).

The KH type-2 domain maps to 17–86 (IDEYLEKELR…NPQIEVEEIK (70 aa)).

Belongs to the universal ribosomal protein uS3 family. As to quaternary structure, part of the 30S ribosomal subunit.

Binds the lower part of the 30S subunit head. This Thermococcus onnurineus (strain NA1) protein is Small ribosomal subunit protein uS3.